The following is a 1149-amino-acid chain: ATP-dependent helicase/deoxyribonuclease subunit B (1149 aa).

Gly8–Ser15 provides a ligand contact to ATP. [4Fe-4S] cluster is bound by residues Cys788, Cys1106, Cys1109, and Cys1115.

The protein belongs to the helicase family. AddB/RexB type 1 subfamily. Heterodimer of AddA and AddB. It depends on Mg(2+) as a cofactor. Requires [4Fe-4S] cluster as cofactor.

Its function is as follows. The heterodimer acts as both an ATP-dependent DNA helicase and an ATP-dependent, dual-direction single-stranded exonuclease. Recognizes the chi site generating a DNA molecule suitable for the initiation of homologous recombination. The AddB subunit has 5' -&gt; 3' nuclease activity but not helicase activity. The protein is ATP-dependent helicase/deoxyribonuclease subunit B of Ruminiclostridium cellulolyticum (strain ATCC 35319 / DSM 5812 / JCM 6584 / H10) (Clostridium cellulolyticum).